Reading from the N-terminus, the 464-residue chain is mRNA capping enzyme LEF-4 (464 aa).

The mRNA triphosphatase stretch occupies residues methionine 1–methionine 204. Residues glutamate 205–asparagine 464 form an mRNA guanylyltransferase region. Lysine 255 serves as the catalytic N6-GMP-lysine intermediate.

The protein belongs to the baculoviridae LEF-4 family. As to quaternary structure, interacts with LEF-8, LEF-9, and p47.

Its subcellular location is the host cytoplasm. It localises to the host nucleus. It carries out the reaction a 5'-end diphospho-ribonucleoside in mRNA + GTP + H(+) = a 5'-end (5'-triphosphoguanosine)-ribonucleoside in mRNA + diphosphate. The catalysed reaction is a 5'-end triphospho-ribonucleoside in mRNA + H2O = a 5'-end diphospho-ribonucleoside in mRNA + phosphate + H(+). Functionally, component of the viral DNA-dependent RNA polymerase that catalyzes two reactions involved in viral RNA cap formation: an RNA 5'-triphosphatase that hydrolyzes the gamma phosphate of triphosphate-terminated RNA and a guanylyltransferase that reacts with GTP to form a covalent protein-guanylate adduct. Therefore plays an essential role in late and very late gene expression. The chain is mRNA capping enzyme LEF-4 (LEF-4) from Autographa californica nuclear polyhedrosis virus (AcMNPV).